A 449-amino-acid polypeptide reads, in one-letter code: UMP-CMP kinase 2, mitochondrial (449 aa).

A mitochondrion-targeting transit peptide spans 1–98; the sequence is MAFARRLLRG…VRAARLHQRL (98 aa). 259 to 266 contributes to the ATP binding site; the sequence is GLDATGKT. Positions 380–412 form a coiled coil; it reads EERLQRLQGRGMEKTREEAELEANSVFRQKVEM.

This sequence belongs to the thymidylate kinase family. As to expression, high levels are observed in myeloid, lymphoid and mesenchymal tissues.

The protein localises to the mitochondrion. The catalysed reaction is CMP + ATP = CDP + ADP. It catalyses the reaction dCMP + ATP = dCDP + ADP. It carries out the reaction a 2'-deoxyribonucleoside 5'-diphosphate + ATP = a 2'-deoxyribonucleoside 5'-triphosphate + ADP. The enzyme catalyses a ribonucleoside 5'-diphosphate + ATP = a ribonucleoside 5'-triphosphate + ADP. Mitochondrial nucleotide monophosphate kinase needed for salvage dNTP synthesis that mediates immunomodulatory and antiviral activities through IFN-dependent and IFN-independent pathways. Restricts the replication of multiple viruses including flaviviruses or coronaviruses. Together with viperin/RSAD2 and ddhCTP, suppresses the replication of several coronaviruses through inhibition of the viral RNA-dependent RNA polymerase activities. Concerning flaviviruses, restricts RNA translation when localized to the mitochondria independently of its kinase activity. Is able to phosphorylate dUMP, dCMP, CMP, UMP and monophosphates of the pyrimidine nucleoside analogs ddC, dFdC, araC, BVDU and FdUrd with ATP as phosphate donor. Efficacy is highest for dUMP followed by dCMP while CMP and UMP are poor substrates. Controls therefore mitochondrial DNA synthesis by supplying required deoxyribonucleotides. CMPK2-dependent mitochondrial DNA synthesis is necessary for the production of oxidized mitochondrial DNA fragments after exposure to NLRP3 activators. In turn, cytosolic oxidized mtDNA associates with the NLRP3 inflammasome complex and is required for its activation. The chain is UMP-CMP kinase 2, mitochondrial (CMPK2) from Homo sapiens (Human).